A 99-amino-acid polypeptide reads, in one-letter code: Large ribosomal subunit protein uL23 (99 aa).

This sequence belongs to the universal ribosomal protein uL23 family. As to quaternary structure, part of the 50S ribosomal subunit. Contacts protein L29, and trigger factor when it is bound to the ribosome.

In terms of biological role, one of the early assembly proteins it binds 23S rRNA. One of the proteins that surrounds the polypeptide exit tunnel on the outside of the ribosome. Forms the main docking site for trigger factor binding to the ribosome. This chain is Large ribosomal subunit protein uL23, found in Francisella tularensis subsp. holarctica (strain OSU18).